The primary structure comprises 359 residues: Ni-sirohydrochlorin a,c-diamide reductive cyclase complex, component CfbD (359 aa).

It belongs to the NifD/NifK/NifE/NifN family. Homodimer or monomer. The Ni-sirohydrochlorin a,c-diamide reductive cyclase complex is composed of a NifH homolog component CfbC and a NifD homolog component CfbD. It depends on [4Fe-4S] cluster as a cofactor.

It carries out the reaction Ni-sirohydrochlorin a,c-diamide + 3 AH2 + ATP + H2O = 15,17(3)-seco-F430-17(3)-acid + 3 A + ADP + phosphate. Its function is as follows. Involved in the biosynthesis of the unique nickel-containing tetrapyrrole coenzyme F430, the prosthetic group of methyl-coenzyme M reductase (MCR), which plays a key role in methanogenesis and anaerobic methane oxidation. Catalyzes both the six-electron reduction of the tetrahydroporphyrin ring system and the gamma-lactamization of the c-acetamide side chain of Ni-sirohydrochlorin a,c-diamide to yield 15,17(3)-seco-F430-17(3)-acid (seco-F430), the last intermediate in the biosynthesis of the coenzyme F430. In Methanothermobacter thermautotrophicus (strain ATCC 29096 / DSM 1053 / JCM 10044 / NBRC 100330 / Delta H) (Methanobacterium thermoautotrophicum), this protein is Ni-sirohydrochlorin a,c-diamide reductive cyclase complex, component CfbD.